The following is a 412-amino-acid chain: Poly-beta-1,6-N-acetyl-D-glucosamine synthase (412 aa).

The next 4 membrane-spanning stretches (helical) occupy residues 6-26 (FLLF…IYFY), 298-318 (IISI…FITA), 332-352 (IFLL…TVAL), and 366-386 (LIFV…VVLV).

This sequence belongs to the glycosyltransferase 2 family.

Its subcellular location is the cell membrane. Its function is as follows. N-acetylglucosaminyltransferase that catalyzes the polymerization of single monomer units of UDP-N-acetylglucosamine to produce the linear homomer poly-beta-1,6-N-acetyl-D-glucosamine (PNAG, also referred to as PIA), a biofilm adhesin polysaccharide. Requires IcaD for full activity. The protein is Poly-beta-1,6-N-acetyl-D-glucosamine synthase (icaA) of Staphylococcus aureus (strain NCTC 8325 / PS 47).